The primary structure comprises 485 residues: GTPase Der (485 aa).

2 consecutive EngA-type G domains span residues 3 to 167 (PTIA…PEPE) and 176 to 349 (PVFA…NAAM). GTP is bound by residues 9–16 (GRPNVGKS), 56–60 (DTGGF), 119–122 (NKGE), 182–189 (GRPNVGKS), 229–233 (DTAGV), and 294–297 (NKWD). The KH-like domain maps to 350–434 (IKMPTPKITR…PLRIQYNVSE (85 aa)). A disordered region spans residues 435–485 (NPYENAEDKPKKKPLRRVSLSNRIEKREGRKEEKNRFKKKTKVSVKKQFSK). The span at 457-469 (RIEKREGRKEEKN) shows a compositional bias: basic and acidic residues. Residues 470-485 (RFKKKTKVSVKKQFSK) show a composition bias toward basic residues.

The protein belongs to the TRAFAC class TrmE-Era-EngA-EngB-Septin-like GTPase superfamily. EngA (Der) GTPase family. In terms of assembly, associates with the 50S ribosomal subunit.

Functionally, GTPase that plays an essential role in the late steps of ribosome biogenesis. The sequence is that of GTPase Der from Neisseria gonorrhoeae (strain NCCP11945).